The following is a 437-amino-acid chain: Glutamate-1-semialdehyde 2,1-aminomutase (437 aa).

N6-(pyridoxal phosphate)lysine is present on K272.

Belongs to the class-III pyridoxal-phosphate-dependent aminotransferase family. HemL subfamily. In terms of assembly, homodimer. The cofactor is pyridoxal 5'-phosphate.

It is found in the cytoplasm. It catalyses the reaction (S)-4-amino-5-oxopentanoate = 5-aminolevulinate. It functions in the pathway porphyrin-containing compound metabolism; protoporphyrin-IX biosynthesis; 5-aminolevulinate from L-glutamyl-tRNA(Glu): step 2/2. The polypeptide is Glutamate-1-semialdehyde 2,1-aminomutase (Moorella thermoacetica (strain ATCC 39073 / JCM 9320)).